We begin with the raw amino-acid sequence, 199 residues long: Recombination protein RecR (199 aa).

The C4-type zinc finger occupies 57-72; that stretch reads CERCNNLSEAPLCAVC. The region spanning 80-174 is the Toprim domain; the sequence is SILCVVESPA…TISRIARGVP (95 aa).

It belongs to the RecR family.

Its function is as follows. May play a role in DNA repair. It seems to be involved in an RecBC-independent recombinational process of DNA repair. It may act with RecF and RecO. The sequence is that of Recombination protein RecR from Acidithiobacillus ferrooxidans (strain ATCC 23270 / DSM 14882 / CIP 104768 / NCIMB 8455) (Ferrobacillus ferrooxidans (strain ATCC 23270)).